The primary structure comprises 315 residues: Acetyl-coenzyme A carboxylase carboxyl transferase subunit alpha (315 aa).

In terms of domain architecture, CoA carboxyltransferase C-terminal spans 40 to 293; it reads LQDKSKTLTE…REELSSQLAM (254 aa).

The protein belongs to the AccA family. In terms of assembly, acetyl-CoA carboxylase is a heterohexamer composed of biotin carboxyl carrier protein (AccB), biotin carboxylase (AccC) and two subunits each of ACCase subunit alpha (AccA) and ACCase subunit beta (AccD).

The protein localises to the cytoplasm. The enzyme catalyses N(6)-carboxybiotinyl-L-lysyl-[protein] + acetyl-CoA = N(6)-biotinyl-L-lysyl-[protein] + malonyl-CoA. The protein operates within lipid metabolism; malonyl-CoA biosynthesis; malonyl-CoA from acetyl-CoA: step 1/1. Component of the acetyl coenzyme A carboxylase (ACC) complex. First, biotin carboxylase catalyzes the carboxylation of biotin on its carrier protein (BCCP) and then the CO(2) group is transferred by the carboxyltransferase to acetyl-CoA to form malonyl-CoA. In Pseudomonas savastanoi pv. phaseolicola (strain 1448A / Race 6) (Pseudomonas syringae pv. phaseolicola (strain 1448A / Race 6)), this protein is Acetyl-coenzyme A carboxylase carboxyl transferase subunit alpha.